We begin with the raw amino-acid sequence, 495 residues long: MEKKKGELKSIFLPFLSTSHIIPLVDMARLFALHDVDVTIITTAHNATVFQKSIDLDASRGRPIRTHVVNFPAAQVGLPVGIEAFNVDTPREMTPRIYMGLSLLQQVFEKLFHDLQPDFIVTDMFHPWSVDAAAKLGIPRIMFHGASYLARSAAHSVEQYAPHLEAKFDTDKFVLPGLPDNLEMTRLQLPDWLRSPNQYTELMRTIKQSEKKSYGSLFNSFYDLESAYYEHYKSIMGTKSWGIGPVSLWANQDAQDKAARGYAKEEEEKEGWLKWLNSKAESSVLYVSFGSINKFPYSQLVEIARALEDSGHDFIWVVRKNDGGEGDNFLEEFEKRMKESNKGYLIWGWAPQLLILENPAIGGLVTHCGWNTVVESVNAGLPMATWPLFAEHFFNEKLVVDVLKIGVPVGAKEWRNWNEFGSEVVKREEIGNAIASLMSEEEEDGGMRKRAKELSVAAKSAIKVGGSSHNNMKELIRELKEIKLSKEAQETAPNP.

An anthocyanidin is bound by residues T18 and H20. H20 acts as the Proton acceptor in catalysis. D123 serves as the catalytic Charge relay. 7 residues coordinate UDP: S291, W349, A350, H367, N371, T372, and E375. Residue A390 coordinates an anthocyanidin.

Belongs to the UDP-glycosyltransferase family.

The enzyme catalyses soyasapogenol B 3-O-beta-D-glucuronate + UDP-alpha-D-galactose = soyasaponin III + UDP + H(+). In terms of biological role, glycosyltransferase that transfers a galactosyl group from UDP-galactose to soyasapogenol B monoglucuronide in the biosynthetic pathway for soyasaponins. The polypeptide is Soyasapogenol B glucuronide galactosyltransferase (GmSGT2) (Glycine max (Soybean)).